A 344-amino-acid chain; its full sequence is Fructose-1,6-bisphosphatase, cytosolic (344 aa).

Mg(2+) is bound by residues Glu-71, Glu-100, Asp-121, Leu-123, and Asp-124. Substrate-binding positions include 124–127 (DGSS), Asn-215, Tyr-247, Tyr-267, and Lys-277. Glu-283 is a Mg(2+) binding site.

Belongs to the FBPase class 1 family. Mg(2+) is required as a cofactor.

The protein resides in the cytoplasm. It catalyses the reaction beta-D-fructose 1,6-bisphosphate + H2O = beta-D-fructose 6-phosphate + phosphate. The chain is Fructose-1,6-bisphosphatase, cytosolic from Oryza coarctata (Wild rice).